The primary structure comprises 98 residues: Large ribosomal subunit protein uL23 (98 aa).

The protein belongs to the universal ribosomal protein uL23 family. As to quaternary structure, part of the 50S ribosomal subunit. Contacts protein L29, and trigger factor when it is bound to the ribosome.

One of the early assembly proteins it binds 23S rRNA. One of the proteins that surrounds the polypeptide exit tunnel on the outside of the ribosome. Forms the main docking site for trigger factor binding to the ribosome. This Lactobacillus johnsonii (strain CNCM I-12250 / La1 / NCC 533) protein is Large ribosomal subunit protein uL23.